A 525-amino-acid polypeptide reads, in one-letter code: Zinc finger protein 678 (525 aa).

14 consecutive C2H2-type zinc fingers follow at residues 97–119 (FQCI…KRIH), 125–147 (YKCE…KRIH), 153–175 (YKCD…KKIH), 181–203 (YKCD…KKIH), 209–231 (YPCE…KRIH), 237–259 (YKCK…KRIH), 265–287 (YKCE…RRIH), 293–315 (YKCE…KRIH), 321–343 (YQCE…KRIH), 349–371 (YKCE…KRIH), 377–399 (YKCK…RRIH), 405–427 (YKCE…KRIH), 433–455 (YKCK…KRIH), and 461–483 (YKCE…KRIH). The segment at 489-511 (YKCKECGKGFYQSSIHSKYKRIY) adopts a C2H2-type 15; degenerate zinc-finger fold.

It belongs to the krueppel C2H2-type zinc-finger protein family.

It is found in the nucleus. Its function is as follows. May be involved in transcriptional regulation. This chain is Zinc finger protein 678 (ZNF678), found in Homo sapiens (Human).